Here is a 150-residue protein sequence, read N- to C-terminus: Cell division protein SepF (150 aa).

The interval 26–45 (DREEIPEEHESKDRTAYQSK) is disordered.

Belongs to the SepF family. As to quaternary structure, homodimer. Interacts with FtsZ.

The protein resides in the cytoplasm. Functionally, cell division protein that is part of the divisome complex and is recruited early to the Z-ring. Probably stimulates Z-ring formation, perhaps through the cross-linking of FtsZ protofilaments. Its function overlaps with FtsA. The chain is Cell division protein SepF from Bacillus licheniformis (strain ATCC 14580 / DSM 13 / JCM 2505 / CCUG 7422 / NBRC 12200 / NCIMB 9375 / NCTC 10341 / NRRL NRS-1264 / Gibson 46).